Here is a 378-residue protein sequence, read N- to C-terminus: Odorant receptor 33a (378 aa).

Residues 1–33 are Cytoplasmic-facing; sequence MDSRRKVRSENLYKTYWLYWRLLGVEGDYPFRR. The chain crosses the membrane as a helical span at residues 34 to 54; the sequence is LVDFTITSFITILFPVHLILG. Residues 55-62 lie on the Extracellular side of the membrane; sequence MYKKPQIQ. The chain crosses the membrane as a helical span at residues 63-83; that stretch reads VFRSLHFTSECLFCSYKFFCF. Topologically, residues 84 to 127 are cytoplasmic; the sequence is RWKLKEIKTIEGLLQDLDSRVESEEERNYFNQNPSRVARMLSKS. A helical transmembrane segment spans residues 128-148; sequence YLVAAISAIITATVAGLFSTG. Residues 149-163 are Extracellular-facing; sequence RNLMYLGWFPYDFQA. A helical membrane pass occupies residues 164-184; sequence TAAIYWISFSYQAIGSSLLIL. The Cytoplasmic portion of the chain corresponds to 185-254; the sequence is ENLANDSYPP…LLRSTLHLSQ (70 aa). Residues 255 to 275 form a helical membrane-spanning segment; that stretch reads LGQFLSSGINISITLINILFF. Residues 276–285 lie on the Extracellular side of the membrane; it reads AENNFAMLYY. A helical membrane pass occupies residues 286–306; the sequence is AVFFAAMLIELFPSCYYGILM. Over 307 to 355 the chain is Cytoplasmic; that stretch reads TMEFDKLPYAIFSSNWLKMDKRYNRSLIILMQLTLVPVNIKAGGIVGID. Residues 356 to 376 traverse the membrane as a helical segment; sequence MSAFFATVRMAYSFYTLALSF. Residues 377–378 lie on the Extracellular side of the membrane; it reads RV.

The protein belongs to the insect chemoreceptor superfamily. Heteromeric odorant receptor channel (TC 1.A.69) family. Or2a subfamily. In terms of assembly, interacts with Orco. Complexes exist early in the endomembrane system in olfactory sensory neurons (OSNs), coupling these complexes to the conserved ciliary trafficking pathway. Expressed in 1-2 cells on the distal edge of the antenna but not the maxillary palp.

Its subcellular location is the cell membrane. Odorant receptor which mediates acceptance or avoidance behavior, depending on its substrates. The odorant receptor repertoire encodes a large collection of odor stimuli that vary widely in identity, intensity, and duration. May form a complex with Orco to form odorant-sensing units, providing sensitive and prolonged odorant signaling and calcium permeability. This Drosophila melanogaster (Fruit fly) protein is Odorant receptor 33a (Or33a).